The sequence spans 132 residues: Large ribosomal subunit protein uL14 (132 aa).

This sequence belongs to the universal ribosomal protein uL14 family. Part of the 50S ribosomal subunit. Forms a cluster with proteins L3 and L24e, part of which may contact the 16S rRNA in 2 intersubunit bridges.

Functionally, binds to 23S rRNA. Forms part of two intersubunit bridges in the 70S ribosome. This chain is Large ribosomal subunit protein uL14, found in Picrophilus torridus (strain ATCC 700027 / DSM 9790 / JCM 10055 / NBRC 100828 / KAW 2/3).